A 196-amino-acid polypeptide reads, in one-letter code: ATP-dependent Clp protease proteolytic subunit (196 aa).

The active-site Nucleophile is serine 101. Residue histidine 126 is part of the active site.

The protein belongs to the peptidase S14 family. Component of the chloroplastic Clp protease core complex.

The protein localises to the plastid. The protein resides in the chloroplast stroma. It carries out the reaction Hydrolysis of proteins to small peptides in the presence of ATP and magnesium. alpha-casein is the usual test substrate. In the absence of ATP, only oligopeptides shorter than five residues are hydrolyzed (such as succinyl-Leu-Tyr-|-NHMec, and Leu-Tyr-Leu-|-Tyr-Trp, in which cleavage of the -Tyr-|-Leu- and -Tyr-|-Trp bonds also occurs).. Functionally, cleaves peptides in various proteins in a process that requires ATP hydrolysis. Has a chymotrypsin-like activity. Plays a major role in the degradation of misfolded proteins. The polypeptide is ATP-dependent Clp protease proteolytic subunit (Gossypium barbadense (Sea Island cotton)).